A 154-amino-acid chain; its full sequence is SsrA-binding protein (154 aa).

The interval 132-154 (KRESIKKRQDKRDMERALKRGAE) is disordered.

Belongs to the SmpB family.

It localises to the cytoplasm. Functionally, required for rescue of stalled ribosomes mediated by trans-translation. Binds to transfer-messenger RNA (tmRNA), required for stable association of tmRNA with ribosomes. tmRNA and SmpB together mimic tRNA shape, replacing the anticodon stem-loop with SmpB. tmRNA is encoded by the ssrA gene; the 2 termini fold to resemble tRNA(Ala) and it encodes a 'tag peptide', a short internal open reading frame. During trans-translation Ala-aminoacylated tmRNA acts like a tRNA, entering the A-site of stalled ribosomes, displacing the stalled mRNA. The ribosome then switches to translate the ORF on the tmRNA; the nascent peptide is terminated with the 'tag peptide' encoded by the tmRNA and targeted for degradation. The ribosome is freed to recommence translation, which seems to be the essential function of trans-translation. This Acaryochloris marina (strain MBIC 11017) protein is SsrA-binding protein.